We begin with the raw amino-acid sequence, 401 residues long: Phosphoglycerate kinase (401 aa).

Residues 20 to 22 (DFN), Arg35, 58 to 61 (HLGR), Arg117, and Arg154 contribute to the substrate site. ATP contacts are provided by residues Lys204, Gly298, Glu329, and 358 to 361 (GGDS).

This sequence belongs to the phosphoglycerate kinase family. As to quaternary structure, monomer.

The protein resides in the cytoplasm. It catalyses the reaction (2R)-3-phosphoglycerate + ATP = (2R)-3-phospho-glyceroyl phosphate + ADP. It functions in the pathway carbohydrate degradation; glycolysis; pyruvate from D-glyceraldehyde 3-phosphate: step 2/5. The polypeptide is Phosphoglycerate kinase (Bifidobacterium longum subsp. infantis (strain ATCC 15697 / DSM 20088 / JCM 1222 / NCTC 11817 / S12)).